Here is a 146-residue protein sequence, read N- to C-terminus: 3-hydroxyacyl-[acyl-carrier-protein] dehydratase FabZ (146 aa).

H49 is a catalytic residue.

This sequence belongs to the thioester dehydratase family. FabZ subfamily.

Its subcellular location is the cytoplasm. The enzyme catalyses a (3R)-hydroxyacyl-[ACP] = a (2E)-enoyl-[ACP] + H2O. Functionally, involved in unsaturated fatty acids biosynthesis. Catalyzes the dehydration of short chain beta-hydroxyacyl-ACPs and long chain saturated and unsaturated beta-hydroxyacyl-ACPs. The chain is 3-hydroxyacyl-[acyl-carrier-protein] dehydratase FabZ from Ectopseudomonas mendocina (strain ymp) (Pseudomonas mendocina).